A 203-amino-acid chain; its full sequence is Outer-membrane lipoprotein carrier protein (203 aa).

Positions 1 to 20 are cleaved as a signal peptide; that stretch reads MKKWLAISCLIAGMTSTAVY.

Belongs to the LolA family. Monomer.

It localises to the periplasm. Functionally, participates in the translocation of lipoproteins from the inner membrane to the outer membrane. Only forms a complex with a lipoprotein if the residue after the N-terminal Cys is not an aspartate (The Asp acts as a targeting signal to indicate that the lipoprotein should stay in the inner membrane). This is Outer-membrane lipoprotein carrier protein from Pectobacterium carotovorum subsp. carotovorum (strain PC1).